Reading from the N-terminus, the 880-residue chain is Calcium-transporting ATPase lmo0841 (880 aa).

Helical transmembrane passes span 47–67 (LWKL…VIAA), 68–88 (LVQL…VLIV), 243–263 (LGLG…GRVL), and 271–291 (MATA…AAIP). Positions 287, 288, 290, and 292 each coordinate Ca(2+). The 4-aspartylphosphate intermediate role is filled by Asp-334. Helical transmembrane passes span 681–701 (IAYL…ALVL), 707–727 (FTAL…AIAL), 756–776 (AVIS…YIGM), 819–839 (YVIG…LPGA), and 854–874 (WSIA…IKVV). The Ca(2+) site is built by Asn-716 and Asp-720.

This sequence belongs to the cation transport ATPase (P-type) (TC 3.A.3) family. Type IIA subfamily.

The protein resides in the cell membrane. It catalyses the reaction Ca(2+)(in) + ATP + H2O = Ca(2+)(out) + ADP + phosphate + H(+). Its activity is regulated as follows. Phosphorylation is inhibited by EGTA and vanadate. ATPase activity is stimulated by Sr(2+). Inhibited by very high concentrations of cyclopiazonic acid (CPA). Catalyzes the hydrolysis of ATP coupled with the transport of calcium. The transport is electrogenic with a probable ATP:Ca(2+):H(+) stoichiometry of 1:1:1. May have an important role in survival of the bacterium when stressed by a combination of a high calcium concentration and alkaline pH. The protein is Calcium-transporting ATPase lmo0841 of Listeria monocytogenes serovar 1/2a (strain ATCC BAA-679 / EGD-e).